A 678-amino-acid polypeptide reads, in one-letter code: MDPSLIKVVNQLQEAFSTVGVQNLIDLPQITVVRSQSSGKSSVLENIVGRDFLPRGTGIVTRRPLVLQLINRPSASGKNEETTTDSDGKDQNNSSEWGEFLHLPGQKFFEFEKIREEIVRETEEKTGKNVGISSVPIYLRIYSPHVLTLTLVDLPGLTKVPVGDQPRDIEKQIREMVLKYISKNNAIILAVNAANTDLANSDGLKLAREVDPEGLRTIGVLTKVDLMDKGTDVVDILAGRVIPLRLGYVPVINRGQKDIEGKKSIRIALEAERNFFETHPSYGSKAQYCGTPFLARKLNMILMHHIRNTLPEIKVRINAALAKYQAELHSLGDTPVGDNSSIVLNLITDFCNEYRTVVDGRSEELSATELSGGARIAFVFHEIFSNGIQAIDPFDEVKDSDIRTILYNSSGPSPSLFMGTAAFEVIVKQQIKRLEDPSLKCVSLIYDELVRILNQLLQRPIFKRYPLLKDEFYKVVIGFFRKCMQPTNTLVMDMVAMEGSYINTVHPDFLSGHQAMAIVQSQNSKPIPVDPKTGKALTNNPVPPVETSSSSGQNFFGSFFGSKNKKRLAAMEPPPPVLRASTTLSDREKTDTEVIKLLIMSYFNIVKRTLADMVPKSISLKMIKYSKEHIQHELLEQLYKSQAFDKLLQESEVTVQRRKECEQMVESLLQASEIVSNV.

The region spanning 24–311 (LIDLPQITVV…LMHHIRNTLP (288 aa)) is the Dynamin-type G domain. The tract at residues 34-41 (RSQSSGKS) is G1 motif. A GTP-binding site is contributed by 34 to 41 (RSQSSGKS). Residues 60–62 (VTR) are G2 motif. The segment at 71-96 (NRPSASGKNEETTTDSDGKDQNNSSE) is disordered. Residues 78–90 (KNEETTTDSDGKD) show a composition bias toward basic and acidic residues. The tract at residues 153-156 (DLPG) is G3 motif. GTP is bound by residues 153-157 (DLPGL) and 222-225 (TKVD). The G4 motif stretch occupies residues 222 to 225 (TKVD). A G5 motif region spans residues 252–255 (INRG). The GED domain occupies 592–678 (TEVIKLLIMS…LQASEIVSNV (87 aa)).

This sequence belongs to the TRAFAC class dynamin-like GTPase superfamily. Dynamin/Fzo/YdjA family.

In Schizosaccharomyces pombe (strain 972 / ATCC 24843) (Fission yeast), this protein is Vacuolar protein sorting-associated protein 1 (vps1).